The sequence spans 258 residues: MATTATEAAPAQEQQANGNGEQKTRHSEVGHKSLLKSDDLYQYILDTSVYPREPESMKELREVTAKHPWNLMTTSADEGQFLNMLIKLIGAKKTMEIGVYTGYSLLATALALPEDGTILAMDINRENYELGLPCIEKAGVAHKIDFREGPALPVLDDLIAEEKNHGSFDFVFVDADKDNYLNYHERLLKLVKLGGLIGYDNTLWNGSVVLPDDAPMRKYIRFYRDFVLVLNKALAADDRVEICQLPVGDGVTLCRRVK.

The segment covering 1-16 (MATTATEAAPAQEQQA) has biased composition (low complexity). Residues 1–31 (MATTATEAAPAQEQQANGNGEQKTRHSEVGH) form a disordered region. A compositionally biased stretch (basic and acidic residues) spans 22–31 (QKTRHSEVGH). Lysine 32 lines the substrate pocket. S-adenosyl-L-methionine-binding positions include threonine 74, glutamate 96, 98-99 (GV), serine 104, aspartate 122, and alanine 151. Residue aspartate 174 coordinates substrate. Aspartate 174 is a binding site for a divalent metal cation. Aspartate 176 is an S-adenosyl-L-methionine binding site. Aspartate 200 and asparagine 201 together coordinate a divalent metal cation. Residue asparagine 205 coordinates substrate.

Belongs to the class I-like SAM-binding methyltransferase superfamily. Cation-dependent O-methyltransferase family. CCoAMT subfamily. The cofactor is a divalent metal cation.

It carries out the reaction (E)-caffeoyl-CoA + S-adenosyl-L-methionine = (E)-feruloyl-CoA + S-adenosyl-L-homocysteine + H(+). It functions in the pathway aromatic compound metabolism; phenylpropanoid biosynthesis. Its function is as follows. Methylates caffeoyl-CoA to feruloyl-CoA and 5-hydroxyferuloyl-CoA to sinapoyl-CoA. Plays a role in the synthesis of feruloylated polysaccharides. Involved in the reinforcement of the plant cell wall. Also involved in the responding to wounding or pathogen challenge by the increased formation of cell wall-bound ferulic acid polymers. The chain is Caffeoyl-CoA O-methyltransferase 1 (CCOAOMT1) from Zea mays (Maize).